The sequence spans 99 residues: Transmembrane protein 14A (99 aa).

Helical transmembrane passes span 1-21 (MDLI…LGYK), 24-44 (GGVP…YGAY), and 79-99 (PAGL…LLLL).

Belongs to the TMEM14 family.

The protein localises to the mitochondrion membrane. The protein resides in the endoplasmic reticulum membrane. Its function is as follows. Inhibits apoptosis via negative regulation of the mitochondrial outer membrane permeabilization involved in apoptotic signaling pathway. The protein is Transmembrane protein 14A (TMEM14A) of Sus scrofa (Pig).